Reading from the N-terminus, the 291-residue chain is MSALQLTPQAASLAERLADLAVDALIAEADLSPKPALVDRRGSGAHTDLHLGLMHSSALSLWPTFKLMADAAGQFNTVGQPLREALGRLGRDGEATMLRTTQGVNTHRGAIWALGLLVTAAALDARNCAPEAVLARAASLAQIKDRQVLVQGSHGNEVVRRYGVMGAREQAQQGFPAVRDFALPQLQRSRAAGSGEQNARLDALLAIMTTLSDTCVLHRAGIEGLHTMQRGAQHVLDVGGSASLAGRRALNQLDQQLLALNASPGGAADLLAACLFIDGLEPALGRVSRSV.

It belongs to the CitG/MdcB family.

The catalysed reaction is 3'-dephospho-CoA + ATP = 2'-(5''-triphospho-alpha-D-ribosyl)-3'-dephospho-CoA + adenine. In terms of biological role, involved in the formation of 2-(5''-phosphoribosyl)-3'-dephosphocoenzyme-A, the prosthetic group of the acyl-carrier protein of the malonate decarboxylase. The polypeptide is Probable 2-(5''-triphosphoribosyl)-3'-dephosphocoenzyme-A synthase (Pseudomonas savastanoi pv. phaseolicola (strain 1448A / Race 6) (Pseudomonas syringae pv. phaseolicola (strain 1448A / Race 6))).